A 651-amino-acid chain; its full sequence is MANSILLFSFVLVLPFVCSVQFNISRFGSDVSEIAYQGDARANGAVELTNIDYTCRAGWATYGKQVPLWNPGTSKPSDFSTRFSFRIDTRNVGYGNYGHGFAFFLAPARIQLPPNSAGGFLGLFNGTNNQSSAFPLVYVEFDTFTNPEWDPLDVKSHVGINNNSLVSSNYTSWNATSHNQDIGRVLIFYDSARRNLSVSWTYDLTSDPLENSSLSYIIDLSKVLPSEVTIGFSATSGGVTEGNRLLSWEFSSSLELIDIKKSQNDKKGMIIGISVSGFVLLTFFITSLIVFLKRKQQKKKAEETENLTSINEDLERGAGPRKFTYKDLASAANNFADDRKLGEGGFGAVYRGYLNSLDMMVAIKKFAGGSKQGKREFVTEVKIISSLRHRNLVQLIGWCHEKDEFLMIYEFMPNGSLDAHLFGKKPHLAWHVRCKITLGLASALLYLHEEWEQCVVHRDIKASNVMLDSNFNAKLGDFGLARLMDHELGPQTTGLAGTFGYMAPEYISTGRASKESDVYSFGVVTLEIVTGRKSVDRRQGRVEPVTNLVEKMWDLYGKGEVITAIDEKLRIGGFDEKQAECLMIVGLWCAHPDVNTRPSIKQAIQVLNLEAPVPHLPTKMPVATYHVSSSNTTSVSSGGATVTFSSAQHGR.

The signal sequence occupies residues 1–19 (MANSILLFSFVLVLPFVCS). A legume-lectin like region spans residues 20–251 (VQFNISRFGS…GNRLLSWEFS (232 aa)). Residues 20 to 269 (VQFNISRFGS…KKSQNDKKGM (250 aa)) lie on the Extracellular side of the membrane. Residues N23, N125, N129, N162, N169, N174, N195, and N211 are each glycosylated (N-linked (GlcNAc...) asparagine). The chain crosses the membrane as a helical span at residues 270 to 290 (IIGISVSGFVLLTFFITSLIV). At 291–651 (FLKRKQQKKK…VTFSSAQHGR (361 aa)) the chain is on the cytoplasmic side. The region spanning 335–616 (FADDRKLGEG…LNLEAPVPHL (282 aa)) is the Protein kinase domain. ATP-binding positions include 341-349 (LGEGGFGAV) and K364. The active-site Proton acceptor is D459. Positions 630-651 (SNTTSVSSGGATVTFSSAQHGR) are disordered.

In the C-terminal section; belongs to the protein kinase superfamily. Ser/Thr protein kinase family. The protein in the N-terminal section; belongs to the leguminous lectin family. As to quaternary structure, interacts with ABCG40.

The protein localises to the cell membrane. The catalysed reaction is L-seryl-[protein] + ATP = O-phospho-L-seryl-[protein] + ADP + H(+). It carries out the reaction L-threonyl-[protein] + ATP = O-phospho-L-threonyl-[protein] + ADP + H(+). Its function is as follows. Promotes hydrogen peroxide H(2)O(2) production and cell death. In terms of biological role, involved in resistance response to the pathogenic oomycetes Phytophthora infestans and Phytophthora capsici. This Arabidopsis thaliana (Mouse-ear cress) protein is L-type lectin-domain containing receptor kinase IX.1.